A 412-amino-acid polypeptide reads, in one-letter code: Imidazolonepropionase (412 aa).

Fe(3+) contacts are provided by His-76 and His-78. His-76 and His-78 together coordinate Zn(2+). Arg-85, Tyr-148, and His-181 together coordinate 4-imidazolone-5-propanoate. N-formimidoyl-L-glutamate is bound at residue Tyr-148. Position 242 (His-242) interacts with Fe(3+). Residue His-242 coordinates Zn(2+). Glu-245 provides a ligand contact to 4-imidazolone-5-propanoate. Fe(3+) is bound at residue Asp-317. Asp-317 contributes to the Zn(2+) binding site. Positions 319 and 321 each coordinate N-formimidoyl-L-glutamate. Ser-322 is a 4-imidazolone-5-propanoate binding site.

The protein belongs to the metallo-dependent hydrolases superfamily. HutI family. The cofactor is Zn(2+). It depends on Fe(3+) as a cofactor.

Its subcellular location is the cytoplasm. It catalyses the reaction 4-imidazolone-5-propanoate + H2O = N-formimidoyl-L-glutamate. It participates in amino-acid degradation; L-histidine degradation into L-glutamate; N-formimidoyl-L-glutamate from L-histidine: step 3/3. Its function is as follows. Catalyzes the hydrolytic cleavage of the carbon-nitrogen bond in imidazolone-5-propanoate to yield N-formimidoyl-L-glutamate. It is the third step in the universal histidine degradation pathway. The sequence is that of Imidazolonepropionase from Staphylococcus aureus (strain MSSA476).